Here is a 210-residue protein sequence, read N- to C-terminus: Urease accessory protein UreF (210 aa).

It belongs to the UreF family. As to quaternary structure, ureD, UreF and UreG form a complex that acts as a GTP-hydrolysis-dependent molecular chaperone, activating the urease apoprotein by helping to assemble the nickel containing metallocenter of UreC. The UreE protein probably delivers the nickel.

The protein resides in the cytoplasm. Required for maturation of urease via the functional incorporation of the urease nickel metallocenter. This Cereibacter sphaeroides (strain ATCC 17023 / DSM 158 / JCM 6121 / CCUG 31486 / LMG 2827 / NBRC 12203 / NCIMB 8253 / ATH 2.4.1.) (Rhodobacter sphaeroides) protein is Urease accessory protein UreF.